We begin with the raw amino-acid sequence, 217 residues long: Phosphoribosylformylglycinamidine synthase subunit PurQ (217 aa).

The region spanning Asn-2–Ser-217 is the Glutamine amidotransferase type-1 domain. The active-site Nucleophile is the Cys-86. Catalysis depends on residues His-194 and Glu-196.

Part of the FGAM synthase complex composed of 1 PurL, 1 PurQ and 2 PurS subunits.

It is found in the cytoplasm. It carries out the reaction N(2)-formyl-N(1)-(5-phospho-beta-D-ribosyl)glycinamide + L-glutamine + ATP + H2O = 2-formamido-N(1)-(5-O-phospho-beta-D-ribosyl)acetamidine + L-glutamate + ADP + phosphate + H(+). It catalyses the reaction L-glutamine + H2O = L-glutamate + NH4(+). The protein operates within purine metabolism; IMP biosynthesis via de novo pathway; 5-amino-1-(5-phospho-D-ribosyl)imidazole from N(2)-formyl-N(1)-(5-phospho-D-ribosyl)glycinamide: step 1/2. In terms of biological role, part of the phosphoribosylformylglycinamidine synthase complex involved in the purines biosynthetic pathway. Catalyzes the ATP-dependent conversion of formylglycinamide ribonucleotide (FGAR) and glutamine to yield formylglycinamidine ribonucleotide (FGAM) and glutamate. The FGAM synthase complex is composed of three subunits. PurQ produces an ammonia molecule by converting glutamine to glutamate. PurL transfers the ammonia molecule to FGAR to form FGAM in an ATP-dependent manner. PurS interacts with PurQ and PurL and is thought to assist in the transfer of the ammonia molecule from PurQ to PurL. The chain is Phosphoribosylformylglycinamidine synthase subunit PurQ from Prochlorococcus marinus (strain NATL2A).